A 380-amino-acid polypeptide reads, in one-letter code: Cytochrome b (380 aa).

4 helical membrane passes run 33–53 (FGSL…FLAM), 77–98 (WLIR…FIHV), 113–133 (WNIG…GYVL), and 178–198 (FFAF…VHLL). Heme b contacts are provided by His83 and His97. The heme b site is built by His182 and His196. A ubiquinone is bound at residue His201. 4 consecutive transmembrane segments (helical) span residues 226-246 (IKDL…VLFF), 288-308 (LGGV…PLLN), 320-340 (ITQV…XXXX), and 347-367 (XXXX…IFMP).

The protein belongs to the cytochrome b family. The cytochrome bc1 complex contains 11 subunits: 3 respiratory subunits (MT-CYB, CYC1 and UQCRFS1), 2 core proteins (UQCRC1 and UQCRC2) and 6 low-molecular weight proteins (UQCRH/QCR6, UQCRB/QCR7, UQCRQ/QCR8, UQCR10/QCR9, UQCR11/QCR10 and a cleavage product of UQCRFS1). This cytochrome bc1 complex then forms a dimer. Requires heme b as cofactor.

Its subcellular location is the mitochondrion inner membrane. Component of the ubiquinol-cytochrome c reductase complex (complex III or cytochrome b-c1 complex) that is part of the mitochondrial respiratory chain. The b-c1 complex mediates electron transfer from ubiquinol to cytochrome c. Contributes to the generation of a proton gradient across the mitochondrial membrane that is then used for ATP synthesis. This Rhipidomys leucodactylus (White-footed climbing mouse) protein is Cytochrome b (MT-CYB).